The following is a 143-amino-acid chain: Immunity protein CdiI (143 aa).

As to quaternary structure, interacts with cognate CdiA-CT but not non-cognate CdiA-CT from E.coli strain 536 / UPEC.

Immunity protein component of a toxin-immunity protein module, which functions as a cellular contact-dependent growth inhibition (CDI) system. CDI modules allow bacteria to communicate with and inhibit the growth of closely related neighboring bacteria in a contact-dependent fashion. Protects cells against the DNase activity of CdiA, its cognate toxin protein, but not against non-cognate CdiA from E.coli strain 536 / UPEC. The chain is Immunity protein CdiI (cdiI) from Dickeya dadantii (strain 3937) (Erwinia chrysanthemi (strain 3937)).